Here is a 640-residue protein sequence, read N- to C-terminus: Chaperone protein DnaK (640 aa).

A Phosphothreonine; by autocatalysis modification is found at Thr201. A compositionally biased stretch (low complexity) spans 603–621 (AASADQGGAPGADAGNAGK). The segment at 603 to 625 (AASADQGGAPGADAGNAGKAQDD) is disordered.

This sequence belongs to the heat shock protein 70 family.

Its function is as follows. Acts as a chaperone. This Stenotrophomonas maltophilia (strain K279a) protein is Chaperone protein DnaK.